Here is a 445-residue protein sequence, read N- to C-terminus: Ribosomal protein uS12 methylthiotransferase RimO (445 aa).

The MTTase N-terminal domain maps to 13–123 (PRVGFVSLGC…VMAAIHHHLP (111 aa)). Residues cysteine 22, cysteine 58, cysteine 87, cysteine 154, cysteine 158, and cysteine 161 each contribute to the [4Fe-4S] cluster site. A Radical SAM core domain is found at 140–377 (LTPKHYAYLK…MQQQEIISKQ (238 aa)). A TRAM domain is found at 380–445 (AVKKGQQLRV…DIHDLWTEKI (66 aa)).

Belongs to the methylthiotransferase family. RimO subfamily. The cofactor is [4Fe-4S] cluster.

The protein localises to the cytoplasm. The catalysed reaction is L-aspartate(89)-[ribosomal protein uS12]-hydrogen + (sulfur carrier)-SH + AH2 + 2 S-adenosyl-L-methionine = 3-methylsulfanyl-L-aspartate(89)-[ribosomal protein uS12]-hydrogen + (sulfur carrier)-H + 5'-deoxyadenosine + L-methionine + A + S-adenosyl-L-homocysteine + 2 H(+). Its function is as follows. Catalyzes the methylthiolation of an aspartic acid residue of ribosomal protein uS12. This Nitrosomonas eutropha (strain DSM 101675 / C91 / Nm57) protein is Ribosomal protein uS12 methylthiotransferase RimO.